The sequence spans 565 residues: Ubiquitin carboxyl-terminal hydrolase 21 (565 aa).

A compositionally biased stretch (basic and acidic residues) spans 1-14 (MPQASEHRLGRTRE). Disordered regions lie at residues 1-103 (MPQA…LPLP), 109-128 (ARSKSVSSGDLRPMGIALGG), and 142-163 (LALRPEPPPLRRSTSLRRLGGF). The span at 42 to 57 (APGPNPMLRPLPPRPG) shows a compositional bias: pro residues. Positions 58-70 (PPEERLKKLELGR) are enriched in basic and acidic residues. The segment covering 71-82 (GRTSGPRPSGPL) has biased composition (low complexity). The Nuclear export signal motif lies at 134–152 (ELGAALSRLALRPEPPPLR). The 347-residue stretch at 212–558 (VGLRNLGNTC…EGYVLFYQLM (347 aa)) folds into the USP domain. C221 (nucleophile) is an active-site residue. 4 residues coordinate Zn(2+): C384, C387, C437, and C440. The active-site Proton acceptor is H518.

This sequence belongs to the peptidase C19 family. USP21 subfamily. Interacts with BEND3.

It is found in the cytoplasm. The protein localises to the nucleus. The enzyme catalyses Thiol-dependent hydrolysis of ester, thioester, amide, peptide and isopeptide bonds formed by the C-terminal Gly of ubiquitin (a 76-residue protein attached to proteins as an intracellular targeting signal).. Deubiquitinating enzyme that hydrolyzes 'Lys-6'- and 'Lys-11'-linked polyubiquitin. Also hydrolyzes heterotypic (mixed and branched) and homotypic chains. Important regulator of energy metabolism. Glucose and fatty acids trigger its nuclear translocation by CBP-dependent acetylation. In the nucleus, deubiquitinates and stabilizes the nuclear receptor PPARD regulating the expression of various genes involved in glucose and lipid metabolism and oxidative phosphorylation. Also acts as a negative regulator of the ribosome quality control (RQC) by mediating deubiquitination of 40S ribosomal proteins RPS10/eS10 and RPS20/uS10, thereby antagonizing ZNF598-mediated 40S ubiquitination. This is Ubiquitin carboxyl-terminal hydrolase 21 (USP21) from Bos taurus (Bovine).